Consider the following 428-residue polypeptide: UPF0053 inner membrane protein YfjD (428 aa).

Residues 1–3 (MEH) are Cytoplasmic-facing. The CNNM transmembrane domain occupies 2-192 (EHISTTTLII…SQISRRNQDM (191 aa)). The chain crosses the membrane as a helical span at residues 4-24 (ISTTTLIIILIIMVVISAYFS). The Periplasmic portion of the chain corresponds to 25-64 (GSETGMMTLNRYRLRHMAKQGNRSAKRVEKLLRKPDRLIS). Residues 65-85 (LVLIGNNLVNILASALGTIVG) traverse the membrane as a helical segment. Over 86–91 (MRLYGD) the chain is Cytoplasmic. The chain crosses the membrane as a helical span at residues 92–112 (AGVAIATGVLTFVVLVFAEVL). The Periplasmic segment spans residues 113–129 (PKTIAALYPEKVAYPSS). A helical transmembrane segment spans residues 130–150 (FLLAPLQILMMPLVWLLNAIT). Topologically, residues 151–428 (RMLMRMMGIK…VKPLRESVAE (278 aa)) are cytoplasmic. CBS domains are found at residues 208 to 270 (MVPR…FTKE) and 272 to 332 (MLRA…FTTS).

This sequence belongs to the UPF0053 family.

It localises to the cell inner membrane. This Escherichia coli (strain K12) protein is UPF0053 inner membrane protein YfjD (yfjD).